The following is a 514-amino-acid chain: Sugar transport protein 4 (514 aa).

The Cytoplasmic portion of the chain corresponds to methionine 1–lysine 22. 12 consecutive transmembrane segments (helical) span residues valine 23–isoleucine 43, leucine 80–serine 100, phenylalanine 117–isoleucine 137, isoleucine 140–methionine 160, glycine 172–alanine 192, isoleucine 202–proline 222, leucine 283–phenylalanine 303, leucine 321–valine 341, isoleucine 348–isoleucine 368, leucine 387–glycine 407, isoleucine 426–leucine 446, and phenylalanine 451–methionine 471. Residues leucine 472–valine 514 lie on the Cytoplasmic side of the membrane.

This sequence belongs to the major facilitator superfamily. Sugar transporter (TC 2.A.1.1) family. In terms of tissue distribution, mostly in flowers and roots, especially in anthers, including pollen, and root tips. Also present in some hydathodes.

Its subcellular location is the cell membrane. Its function is as follows. Mediates an active uptake of hexoses, probably by sugar/hydrogen symport. Can transport glucose, methylglucose, galactose, xylose and mannose, but not fructose. The chain is Sugar transport protein 4 (STP4) from Arabidopsis thaliana (Mouse-ear cress).